The sequence spans 229 residues: 23 kDa piroplasm membrane protein (229 aa).

The N-terminal stretch at 1–19 is a signal peptide; it reads MNKYFKVFFFVLLTHALKS. The Extracellular segment spans residues 20-203; the sequence is ALIFGQATLQ…EKEDTNKKKY (184 aa). Residues 204–224 form a helical membrane-spanning segment; it reads VLMVVVVVVFVVVASLVVFLV. Residues 225 to 229 lie on the Cytoplasmic side of the membrane; that stretch reads KFCLK.

Its subcellular location is the membrane. The chain is 23 kDa piroplasm membrane protein from Theileria parva (East coast fever infection agent).